A 327-amino-acid polypeptide reads, in one-letter code: Interleukin-12 subunit beta (327 aa).

Residues 1–22 form the signal peptide; that stretch reads MCLQQLVISWVSLVWLASPLLA. An Ig-like C2-type domain is found at 23–106; it reads IWELEKNVYV…LSQMLLLLHK (84 aa). A disulfide bridge links cysteine 50 with cysteine 90. Asparagine 134 and asparagine 152 each carry an N-linked (GlcNAc...) asparagine glycan. The region spanning 237–327 is the Fibronectin type-III domain; the sequence is PPKNLKMKPS…WSEWATMSCP (91 aa).

This sequence belongs to the IL-12B family. Heterodimer with IL12A; disulfide-linked. The heterodimer is known as interleukin IL-12. Heterodimer with IL23A; disulfide-linked. The heterodimer is known as interleukin IL-23. Also secreted as a monomer. Interacts with NBR1; this interaction promotes IL-12 secretion.

It is found in the secreted. Cytokine that can act as a growth factor for activated T and NK cells, enhance the lytic activity of NK/lymphokine-activated killer cells, and stimulate the production of IFN-gamma by resting PBMC. Its function is as follows. Associates with IL23A to form the IL-23 interleukin, a heterodimeric cytokine which functions in innate and adaptive immunity. IL-23 may constitute with IL-17 an acute response to infection in peripheral tissues. IL-23 binds to a heterodimeric receptor complex composed of IL12RB1 and IL23R, activates the Jak-Stat signaling cascade, stimulates memory rather than naive T-cells and promotes production of pro-inflammatory cytokines. IL-23 induces autoimmune inflammation and thus may be responsible for autoimmune inflammatory diseases and may be important for tumorigenesis. The chain is Interleukin-12 subunit beta (IL12B) from Marmota monax (Woodchuck).